The chain runs to 612 residues: MIADNSKDFDLKSFLANLTTHSGVYRMLDKHGEIIYVGKAKNLKNRVNSYFSKGAKDSKTLMMVEQVARIEITIAPSDYEAYLLENNLIKQHRPKYNILFKDDKSYPYLVISRDKFPRVSFYRGKSAYKKGQCFGPYVSISSVKNTLNIIQKIFPIRQCENSYYKSRVRPCLQYQIKRCLAPCVGLVSQEQYDEQLAILKKFLAGKFSSVLEEISAKMYQASEDMEYEKAQVYRDQLVILRKLQQQQIVDIQEDKTFDVIGIYMQDSYASIALLQIQNGDVVADRHWSIDAKGQDKTSIMHAFLSHFYLGDEIRNIWPKNIILSKVEFADITDLMNSISQKIGQAINWIVAPAADNLKWLKLAEVNARQKLNIYTSSKSQYQKRLESLKEFLELEKDIKRIECFDISHFQGEATIASCVVYTDEGEDRKSHRRYNIKDIKAGDDYAAIHQAVSRRVSSGLEADNLPDVMIIDGGKGQIHQAEAVFREYGIQDKVQLVSLGKGVERISGKEKIYKGFDDTEYTLDEHNPGFLLLRQVRDSAHDHAIKGQRKKVSANRQSSIIEEIEGVGPKRRKALIMYFGGWQELSRAFVDEIAKVKGISNKLAQEIWECFH.

The region spanning 20–98 is the GIY-YIG domain; that stretch reads THSGVYRMLD…IKQHRPKYNI (79 aa). Residues 208–243 enclose the UVR domain; sequence SSVLEEISAKMYQASEDMEYEKAQVYRDQLVILRKL.

It belongs to the UvrC family. In terms of assembly, interacts with UvrB in an incision complex.

It localises to the cytoplasm. The UvrABC repair system catalyzes the recognition and processing of DNA lesions. UvrC both incises the 5' and 3' sides of the lesion. The N-terminal half is responsible for the 3' incision and the C-terminal half is responsible for the 5' incision. In Francisella philomiragia subsp. philomiragia (strain ATCC 25017 / CCUG 19701 / FSC 153 / O#319-036), this protein is UvrABC system protein C.